Consider the following 500-residue polypeptide: E3 ubiquitin-protein ligase TRIM4 (500 aa).

The RING-type zinc finger occupies Cys12–Arg53. Residues Val82–Ile123 form a B box-type zinc finger. Zn(2+) contacts are provided by Cys87, His90, Cys109, and His115. Residues Glu212–Val253 adopt a coiled-coil conformation. The region spanning Lys288–Lys500 is the B30.2/SPRY domain.

It belongs to the TRIM/RBCC family. As to quaternary structure, homotrimer.

The protein localises to the cytoplasm. It carries out the reaction S-ubiquitinyl-[E2 ubiquitin-conjugating enzyme]-L-cysteine + [acceptor protein]-L-lysine = [E2 ubiquitin-conjugating enzyme]-L-cysteine + N(6)-ubiquitinyl-[acceptor protein]-L-lysine.. Its pathway is protein modification; protein ubiquitination. Its function is as follows. E3 ubiquitin-protein ligase. Mediates 'Lys-63'-linked polyubiquitination of the innate immune receptor RIGI, this linkage doesn't lead to proteasomal degradation but seems to enhance IFN induction. This chain is E3 ubiquitin-protein ligase TRIM4 (TRIM4), found in Homo sapiens (Human).